A 677-amino-acid chain; its full sequence is Methionine--tRNA ligase (677 aa).

A 'HIGH' region motif is present at residues 15–25 (PYANGSIHLGH). The Zn(2+) site is built by C146, C149, C159, and C162. Residues 333 to 337 (KMSKS) carry the 'KMSKS' region motif. Residue K336 participates in ATP binding. Residues 575 to 677 (DFAKVDLRVA…DGAKPGQQVK (103 aa)) form the tRNA-binding domain.

The protein belongs to the class-I aminoacyl-tRNA synthetase family. MetG type 1 subfamily. Homodimer. The cofactor is Zn(2+).

The protein localises to the cytoplasm. The enzyme catalyses tRNA(Met) + L-methionine + ATP = L-methionyl-tRNA(Met) + AMP + diphosphate. Functionally, is required not only for elongation of protein synthesis but also for the initiation of all mRNA translation through initiator tRNA(fMet) aminoacylation. The protein is Methionine--tRNA ligase of Citrobacter koseri (strain ATCC BAA-895 / CDC 4225-83 / SGSC4696).